Reading from the N-terminus, the 824-residue chain is Protein bicaudal D homolog 2 (824 aa).

An N-acetylserine modification is found at serine 2. Residues 20–269 (EWLRAEVKRL…ELSHYMSIND (250 aa)) adopt a coiled-coil conformation. Positions 25–398 (EVKRLSHELA…RLTENLSALR (374 aa)) are interacts with DYNLL1, DYNC1H1, DYNC1I2, DCTN1 and DCTN2. Phosphoserine occurs at positions 190, 224, and 318. The segment at 311 to 330 (LPLDNKTSTPKKEGLAPPSP) is disordered. Threonine 319 is modified (phosphothreonine). The segment at 334–599 (SDLLSELNIS…LLAPEAGRAD (266 aa)) is interaction with KIF5A. Residues 338 to 537 (SELNISEIQK…VTFSEELANL (200 aa)) adopt a coiled-coil conformation. Phosphoserine is present on residues serine 343 and serine 395. Disordered regions lie at residues 398–425 (RRLQASKERQTALDNEKDRDSHEDGDYY), 559–622 (EGQG…DPRR), and 804–824 (EQTRRGRAKAAPKTKPATPSL). The segment covering 402-422 (ASKERQTALDNEKDRDSHEDG) has biased composition (basic and acidic residues). 3 positions are modified to phosphoserine: serine 568, serine 574, and serine 582. The tract at residues 590–824 (LLAPEAGRAD…PKTKPATPSL (235 aa)) is interaction with RANBP2. Threonine 602 is subject to Phosphothreonine. Positions 604 to 618 (DSSPSPGSSLPSPLS) are enriched in low complexity. The stretch at 666–808 (DKDKEALMEE…LELDHEQTRR (143 aa)) forms a coiled coil. The interval 666–814 (DKDKEALMEE…QTRRGRAKAA (149 aa)) is interacts with RAB6A. Threonine 821 bears the Phosphothreonine mark. Serine 823 carries the phosphoserine modification.

Belongs to the BicD family. In terms of assembly, part of a tripartite complex with dynein and dynactin, acts an adapter linking the dynein motor complex and dynactin. Interacts with CPNE4 (via VWFA domain). Interacts with RAB6A. Interacts with NEK9. Interacts with DNAI1. Interacts with DYNC1H1. Interacts with RANBP2. Binds preferentially to tyrosinated microtubules than to detyrosinated microtubules. Interacts with DYNLL1, DYNC1I2; DCTN1, DCTN2 and KIF5A. Interacts with KIF1C. Post-translationally, phosphorylated by NEK9 in vitro. In terms of tissue distribution, ubiquitous.

It is found in the golgi apparatus. Its subcellular location is the cytoplasm. The protein localises to the cytoskeleton. It localises to the nucleus envelope. The protein resides in the nucleus. It is found in the nuclear pore complex. Functionally, acts as an adapter protein linking the dynein motor complex to various cargos and converts dynein from a non-processive to a highly processive motor in the presence of dynactin. Facilitates and stabilizes the interaction between dynein and dynactin and activates dynein processivity (the ability to move along a microtubule for a long distance without falling off the track). Facilitates the binding of RAB6A to the Golgi by stabilizing its GTP-bound form. Regulates coat complex coatomer protein I (COPI)-independent Golgi-endoplasmic reticulum transport via its interaction with RAB6A and recruitment of the dynein-dynactin motor complex. Contributes to nuclear and centrosomal positioning prior to mitotic entry through regulation of both dynein and kinesin-1. During G2 phase of the cell cycle, associates with RANBP2 at the nuclear pores and recruits dynein and dynactin to the nuclear envelope to ensure proper positioning of the nucleus relative to centrosomes prior to the onset of mitosis. This chain is Protein bicaudal D homolog 2, found in Homo sapiens (Human).